The primary structure comprises 502 residues: ATP synthase subunit alpha (502 aa).

Position 169-176 (169-176) interacts with ATP; it reads GDRQTGKT.

It belongs to the ATPase alpha/beta chains family. F-type ATPases have 2 components, CF(1) - the catalytic core - and CF(0) - the membrane proton channel. CF(1) has five subunits: alpha(3), beta(3), gamma(1), delta(1), epsilon(1). CF(0) has three main subunits: a(1), b(2) and c(9-12). The alpha and beta chains form an alternating ring which encloses part of the gamma chain. CF(1) is attached to CF(0) by a central stalk formed by the gamma and epsilon chains, while a peripheral stalk is formed by the delta and b chains.

The protein resides in the cell membrane. The catalysed reaction is ATP + H2O + 4 H(+)(in) = ADP + phosphate + 5 H(+)(out). Produces ATP from ADP in the presence of a proton gradient across the membrane. The alpha chain is a regulatory subunit. This chain is ATP synthase subunit alpha, found in Exiguobacterium sp. (strain ATCC BAA-1283 / AT1b).